The chain runs to 441 residues: BTB/POZ domain-containing protein At3g05675 (441 aa).

Residues 20 to 98 (SDIVVRLRNE…LYVVSDDVHE (79 aa)) enclose the BTB domain.

The protein operates within protein modification; protein ubiquitination. Functionally, may act as a substrate-specific adapter of an E3 ubiquitin-protein ligase complex (CUL3-RBX1-BTB) which mediates the ubiquitination and subsequent proteasomal degradation of target proteins. This is BTB/POZ domain-containing protein At3g05675 from Arabidopsis thaliana (Mouse-ear cress).